A 440-amino-acid chain; its full sequence is Eukaryotic translation initiation factor 3 subunit E (440 aa).

Positions 219–392 constitute a PCI domain; the sequence is VYFNYPKGRD…GQVVMGAKTT (174 aa).

It belongs to the eIF-3 subunit E family. As to quaternary structure, component of the eukaryotic translation initiation factor 3 (eIF-3) complex.

The protein resides in the cytoplasm. Its function is as follows. Component of the eukaryotic translation initiation factor 3 (eIF-3) complex, which is involved in protein synthesis of a specialized repertoire of mRNAs and, together with other initiation factors, stimulates binding of mRNA and methionyl-tRNAi to the 40S ribosome. The eIF-3 complex specifically targets and initiates translation of a subset of mRNAs involved in cell proliferation. The sequence is that of Eukaryotic translation initiation factor 3 subunit E from Brugia malayi (Filarial nematode worm).